Consider the following 179-residue polypeptide: Large ribosomal subunit protein uL5 (179 aa).

The protein belongs to the universal ribosomal protein uL5 family. In terms of assembly, part of the 50S ribosomal subunit; part of the 5S rRNA/L5/L18/L25 subcomplex. Contacts the 5S rRNA and the P site tRNA. Forms a bridge to the 30S subunit in the 70S ribosome.

Functionally, this is one of the proteins that bind and probably mediate the attachment of the 5S RNA into the large ribosomal subunit, where it forms part of the central protuberance. In the 70S ribosome it contacts protein S13 of the 30S subunit (bridge B1b), connecting the 2 subunits; this bridge is implicated in subunit movement. Contacts the P site tRNA; the 5S rRNA and some of its associated proteins might help stabilize positioning of ribosome-bound tRNAs. This is Large ribosomal subunit protein uL5 from Glaesserella parasuis serovar 5 (strain SH0165) (Haemophilus parasuis).